The sequence spans 400 residues: Acetate kinase (400 aa).

N7 contributes to the Mg(2+) binding site. K14 contributes to the ATP binding site. R92 serves as a coordination point for substrate. D149 (proton donor/acceptor) is an active-site residue. ATP is bound by residues 209–213, 283–285, and 331–335; these read HLGNG, DAR, and GMGEN. E385 lines the Mg(2+) pocket.

Belongs to the acetokinase family. As to quaternary structure, homodimer. Mg(2+) is required as a cofactor. Requires Mn(2+) as cofactor.

It localises to the cytoplasm. The catalysed reaction is acetate + ATP = acetyl phosphate + ADP. The protein operates within metabolic intermediate biosynthesis; acetyl-CoA biosynthesis; acetyl-CoA from acetate: step 1/2. Its function is as follows. Catalyzes the formation of acetyl phosphate from acetate and ATP. Can also catalyze the reverse reaction. The chain is Acetate kinase from Helicobacter acinonychis (strain Sheeba).